The chain runs to 478 residues: Vitronectin (478 aa).

A signal peptide spans 1-19 (MAPLRPLLILALLAWVALA). Residues 20–63 (DQESCKGRCTEGFNVDKKCQCDELCSYYQSCCTDYTAECKPQVT) form the SMB domain. Intrachain disulfides connect Cys24–Cys28, Cys24–Cys40, Cys28–Cys58, Cys38–Cys40, Cys38–Cys51, Cys44–Cys50, and Cys51–Cys58. Positions 64–66 (RGD) match the Cell attachment site motif. Thr69 bears the Phosphothreonine; by CK2; in vitro mark. A Sulfotyrosine modification is found at Tyr75. Residue Thr76 is modified to Phosphothreonine; by CK2; in vitro. At Tyr78 the chain carries Sulfotyrosine. A glycan (N-linked (GlcNAc...) (complex) asparagine) is linked at Asn86. The disordered stretch occupies residues 91-158 (EQVGGPSLTS…PPAEEELCSG (68 aa)). Residues 97–112 (SLTSDLQAQSKGNPEQ) show a composition bias toward polar residues. 2 positions are modified to phosphoserine: Ser130 and Ser137. The span at 133-143 (EGIDSRPETLH) shows a compositional bias: basic and acidic residues. 3 Hemopexin repeats span residues 158 to 202 (GKPF…VWGI), 203 to 250 (EGPI…FDGI), and 251 to 305 (PDNV…FEHF). Residue Asn169 is glycosylated (N-linked (GlcNAc...) asparagine). Asn242 carries an N-linked (GlcNAc...) (complex) asparagine glycan. A Sulfotyrosine modification is found at Tyr282. Cys293 and Cys430 are joined by a disulfide. Phosphoserine is present on Ser312. The tract at residues 362-395 (RPSLAKKQRFRHRNRKGYRSQRGHSRGRNQNSRR) is heparin-binding. The segment at 364–398 (SLAKKQRFRHRNRKGYRSQRGHSRGRNQNSRRPSR) is disordered. Residues 365–388 (LAKKQRFRHRNRKGYRSQRGHSRG) show a composition bias toward basic residues. At Ser397 the chain carries Phosphoserine; by PKA. Sulfotyrosine occurs at positions 417 and 420. A Hemopexin 4 repeat occupies 419–472 (DYRMDWLVPATCEPIQSVFFFSGDKYYRVNLRTRRVDTVDPPYPRSIAQYWLGC).

As to quaternary structure, exists in two forms: a single chain 75 kDa form (V75) and a clipped form composed of two chains (65 kDa and 10 kDa) (V65+V10) which are held together by a disulfide bond. Interacts with SERPINE1/PAI1, insulin and C1QBP. In terms of assembly, (Microbial infection) Interacts (via hemopexin repeat 2) with P.falciparum (isolate CDC / Honduras) SERA5 P47 (via C-terminus); may form heterotetramers of two VTN and SERA5 P47 heterodimers; the interaction may protect merozoites from phagocytosis by host monocytes; VTN glycosylation appears to be dispensable for the interaction. In terms of processing, sulfated on tyrosine residues. Post-translationally, N- and O-glycosylated. Phosphorylation on Thr-69 and Thr-76 favors cell adhesion and spreading. In terms of processing, it has been suggested that the active SMB domain may be permitted considerable disulfide bond heterogeneity or variability, thus two alternate disulfide patterns based on 3D structures are described with 1 disulfide bond conserved in both. Post-translationally, phosphorylation sites are present in the extracellular medium. As to expression, expressed in the retina pigment epithelium (at protein level). Expressed in plasma (at protein level). Expressed in serum (at protein level).

It localises to the secreted. Its subcellular location is the extracellular space. It is found in the parasitophorous vacuole. Functionally, vitronectin is a cell adhesion and spreading factor found in serum and tissues. Vitronectin interact with glycosaminoglycans and proteoglycans. Is recognized by certain members of the integrin family and serves as a cell-to-substrate adhesion molecule. Inhibitor of the membrane-damaging effect of the terminal cytolytic complement pathway. In terms of biological role, somatomedin-B is a growth hormone-dependent serum factor with protease-inhibiting activity. The polypeptide is Vitronectin (VTN) (Homo sapiens (Human)).